Consider the following 214-residue polypeptide: ATP-dependent Clp protease proteolytic subunit (214 aa).

Catalysis depends on Ser110, which acts as the Nucleophile. His135 is a catalytic residue.

It belongs to the peptidase S14 family. As to quaternary structure, fourteen ClpP subunits assemble into 2 heptameric rings which stack back to back to give a disk-like structure with a central cavity, resembling the structure of eukaryotic proteasomes.

It is found in the cytoplasm. The enzyme catalyses Hydrolysis of proteins to small peptides in the presence of ATP and magnesium. alpha-casein is the usual test substrate. In the absence of ATP, only oligopeptides shorter than five residues are hydrolyzed (such as succinyl-Leu-Tyr-|-NHMec, and Leu-Tyr-Leu-|-Tyr-Trp, in which cleavage of the -Tyr-|-Leu- and -Tyr-|-Trp bonds also occurs).. Cleaves peptides in various proteins in a process that requires ATP hydrolysis. Has a chymotrypsin-like activity. Plays a major role in the degradation of misfolded proteins. This chain is ATP-dependent Clp protease proteolytic subunit, found in Legionella pneumophila (strain Paris).